Here is a 95-residue protein sequence, read N- to C-terminus: Citrate lyase acyl carrier protein (95 aa).

S14 is modified (O-(phosphoribosyl dephospho-coenzyme A)serine).

This sequence belongs to the CitD family. In terms of assembly, oligomer with a subunit composition of (alpha,beta,gamma)6.

It is found in the cytoplasm. Its function is as follows. Covalent carrier of the coenzyme of citrate lyase. In Haemophilus influenzae (strain PittEE), this protein is Citrate lyase acyl carrier protein.